The following is a 375-amino-acid chain: Chaperone protein DnaJ (375 aa).

One can recognise a J domain in the interval 5-70 (DYYEVLGVER…GKRSAYDQYG (66 aa)). A CR-type zinc finger spans residues 134–212 (GTTVTIRVPT…CHGQGRVEES (79 aa)). Zn(2+) is bound by residues cysteine 147, cysteine 150, cysteine 164, cysteine 167, cysteine 186, cysteine 189, cysteine 200, and cysteine 203. 4 CXXCXGXG motif repeats span residues 147–154 (CKTCDGTG), 164–171 (CTTCGGIG), 186–193 (CPRCHGSG), and 200–207 (CGSCHGQG).

The protein belongs to the DnaJ family. As to quaternary structure, homodimer. Zn(2+) serves as cofactor.

The protein localises to the cytoplasm. Its function is as follows. Participates actively in the response to hyperosmotic and heat shock by preventing the aggregation of stress-denatured proteins and by disaggregating proteins, also in an autonomous, DnaK-independent fashion. Unfolded proteins bind initially to DnaJ; upon interaction with the DnaJ-bound protein, DnaK hydrolyzes its bound ATP, resulting in the formation of a stable complex. GrpE releases ADP from DnaK; ATP binding to DnaK triggers the release of the substrate protein, thus completing the reaction cycle. Several rounds of ATP-dependent interactions between DnaJ, DnaK and GrpE are required for fully efficient folding. Also involved, together with DnaK and GrpE, in the DNA replication of plasmids through activation of initiation proteins. The sequence is that of Chaperone protein DnaJ from Ectopseudomonas mendocina (strain ymp) (Pseudomonas mendocina).